The chain runs to 41 residues: Photosystem II reaction center protein L (41 aa).

A helical membrane pass occupies residues 20 to 40 (SLYLGLLLVFVVGILFSSYFF).

Belongs to the PsbL family. PSII is composed of 1 copy each of membrane proteins PsbA, PsbB, PsbC, PsbD, PsbE, PsbF, PsbH, PsbI, PsbJ, PsbK, PsbL, PsbM, PsbT, PsbX, PsbY, PsbZ, Psb30/Ycf12, peripheral proteins PsbO, CyanoQ (PsbQ), PsbU, PsbV and a large number of cofactors. It forms dimeric complexes.

The protein localises to the cellular thylakoid membrane. One of the components of the core complex of photosystem II (PSII). PSII is a light-driven water:plastoquinone oxidoreductase that uses light energy to abstract electrons from H(2)O, generating O(2) and a proton gradient subsequently used for ATP formation. It consists of a core antenna complex that captures photons, and an electron transfer chain that converts photonic excitation into a charge separation. This subunit is found at the monomer-monomer interface and is required for correct PSII assembly and/or dimerization. This is Photosystem II reaction center protein L from Trichodesmium erythraeum (strain IMS101).